We begin with the raw amino-acid sequence, 334 residues long: Biotin synthase (334 aa).

The region spanning 55 to 285 is the Radical SAM core domain; the sequence is GEGGGVHACS…AHPSKIIKFA (231 aa). Positions 73, 77, and 80 each coordinate [4Fe-4S] cluster. 3 residues coordinate [2Fe-2S] cluster: C152, C213, and K283.

Belongs to the radical SAM superfamily. Biotin synthase family. As to quaternary structure, homodimer. [4Fe-4S] cluster is required as a cofactor. It depends on [2Fe-2S] cluster as a cofactor.

It catalyses the reaction (4R,5S)-dethiobiotin + (sulfur carrier)-SH + 2 reduced [2Fe-2S]-[ferredoxin] + 2 S-adenosyl-L-methionine = (sulfur carrier)-H + biotin + 2 5'-deoxyadenosine + 2 L-methionine + 2 oxidized [2Fe-2S]-[ferredoxin]. The protein operates within cofactor biosynthesis; biotin biosynthesis; biotin from 7,8-diaminononanoate: step 2/2. Its function is as follows. Catalyzes the conversion of dethiobiotin (DTB) to biotin by the insertion of a sulfur atom into dethiobiotin via a radical-based mechanism. This chain is Biotin synthase, found in Chlorobaculum parvum (strain DSM 263 / NCIMB 8327) (Chlorobium vibrioforme subsp. thiosulfatophilum).